The primary structure comprises 627 residues: Pescadillo homolog (627 aa).

Residues 321–414 form the BRCT domain; sequence RLRTLFKGLK…QLLPTNKYFI (94 aa). Disordered stretches follow at residues 450 to 469, 488 to 562, and 595 to 627; these read HVQS…ETVD, YKKF…LQAR, and TIEA…KLGK. Phosphoserine is present on residues Ser-453 and Ser-457. Acidic residues-rich tracts occupy residues 454–469 and 497–521; these read DDDS…ETVD and VNED…EELD. Residues 507 to 538 are a coiled coil; it reads DDDNEDDDEEEEELDEKTKRLQEEKQKMSVQS. Residues 522 to 533 are compositionally biased toward basic and acidic residues; it reads EKTKRLQEEKQK. Residues 540-549 are compositionally biased toward basic residues; that stretch reads KVHKVNKRQV. Composition is skewed to basic and acidic residues over residues 550-559 and 595-615; these read HKAEVDEHRL and TIEA…RKEA. The stretch at 582-625 forms a coiled coil; it reads KEKEEWLLRKKRRTIEASEKEARKTAKREARKEAAAAAAKASKL. Low complexity predominate over residues 616-627; sequence AAAAAKASKLGK.

The protein belongs to the pescadillo family.

The protein localises to the nucleus. Its subcellular location is the nucleolus. The protein resides in the nucleoplasm. Required for maturation of ribosomal RNAs and formation of the large ribosomal subunit. This chain is Pescadillo homolog, found in Drosophila sechellia (Fruit fly).